A 237-amino-acid polypeptide reads, in one-letter code: 1-(5-phosphoribosyl)-5-[(5-phosphoribosylamino)methylideneamino] imidazole-4-carboxamide isomerase (237 aa).

D8 serves as the catalytic Proton acceptor. Residue D128 is the Proton donor of the active site.

It belongs to the HisA/HisF family.

The protein resides in the cytoplasm. It catalyses the reaction 1-(5-phospho-beta-D-ribosyl)-5-[(5-phospho-beta-D-ribosylamino)methylideneamino]imidazole-4-carboxamide = 5-[(5-phospho-1-deoxy-D-ribulos-1-ylimino)methylamino]-1-(5-phospho-beta-D-ribosyl)imidazole-4-carboxamide. It functions in the pathway amino-acid biosynthesis; L-histidine biosynthesis; L-histidine from 5-phospho-alpha-D-ribose 1-diphosphate: step 4/9. This chain is 1-(5-phosphoribosyl)-5-[(5-phosphoribosylamino)methylideneamino] imidazole-4-carboxamide isomerase, found in Gemmatimonas aurantiaca (strain DSM 14586 / JCM 11422 / NBRC 100505 / T-27).